A 529-amino-acid polypeptide reads, in one-letter code: Bifunctional purine biosynthesis protein PurH (529 aa).

An MGS-like domain is found at Met1 to Val148. Position 287 is an N6-acetyllysine (Lys287).

The protein belongs to the PurH family.

It catalyses the reaction (6R)-10-formyltetrahydrofolate + 5-amino-1-(5-phospho-beta-D-ribosyl)imidazole-4-carboxamide = 5-formamido-1-(5-phospho-D-ribosyl)imidazole-4-carboxamide + (6S)-5,6,7,8-tetrahydrofolate. The catalysed reaction is IMP + H2O = 5-formamido-1-(5-phospho-D-ribosyl)imidazole-4-carboxamide. It functions in the pathway purine metabolism; IMP biosynthesis via de novo pathway; 5-formamido-1-(5-phospho-D-ribosyl)imidazole-4-carboxamide from 5-amino-1-(5-phospho-D-ribosyl)imidazole-4-carboxamide (10-formyl THF route): step 1/1. The protein operates within purine metabolism; IMP biosynthesis via de novo pathway; IMP from 5-formamido-1-(5-phospho-D-ribosyl)imidazole-4-carboxamide: step 1/1. The protein is Bifunctional purine biosynthesis protein PurH of Escherichia coli O9:H4 (strain HS).